The chain runs to 151 residues: Probable transport accessory protein MmpS1 (151 aa).

Helical transmembrane passes span 8–28 and 81–101; these read FWIPMVIVIVVAVAAVTVSRL and VVNAAVPWSFTIVTTLTAVVA.

This sequence belongs to the MmpS family.

The protein resides in the cell membrane. This Mycobacterium tuberculosis (strain CDC 1551 / Oshkosh) protein is Probable transport accessory protein MmpS1 (mmpS1).